The sequence spans 654 residues: Threonine--tRNA ligase (654 aa).

In terms of domain architecture, TGS spans 1-63 (MAQISLTFPD…DADASIAIHT (63 aa)). A catalytic region spans residues 247 to 544 (DHRKLGREMN…LIENFAGKLP (298 aa)). Residues C344, H395, and H521 each contribute to the Zn(2+) site.

This sequence belongs to the class-II aminoacyl-tRNA synthetase family. Homodimer. Requires Zn(2+) as cofactor.

The protein localises to the cytoplasm. It catalyses the reaction tRNA(Thr) + L-threonine + ATP = L-threonyl-tRNA(Thr) + AMP + diphosphate + H(+). Functionally, catalyzes the attachment of threonine to tRNA(Thr) in a two-step reaction: L-threonine is first activated by ATP to form Thr-AMP and then transferred to the acceptor end of tRNA(Thr). Also edits incorrectly charged L-seryl-tRNA(Thr). This chain is Threonine--tRNA ligase, found in Dinoroseobacter shibae (strain DSM 16493 / NCIMB 14021 / DFL 12).